Reading from the N-terminus, the 172-residue chain is Putative F-box protein At3g13825 (172 aa).

The F-box domain maps to 1–51 (MTTLSNLSVDLVGEIFSRVPLISLSEVRCTCTTWNTLSWNILSENYVFGKA).

The chain is Putative F-box protein At3g13825 from Arabidopsis thaliana (Mouse-ear cress).